The primary structure comprises 426 residues: Serine--tRNA ligase (426 aa).

231-233 contributes to the L-serine binding site; it reads TAE. Residues 262-264 and Val278 each bind ATP; that span reads RRE. Residue Glu285 participates in L-serine binding. Position 349-352 (349-352) interacts with ATP; it reads EVSS. Ser384 serves as a coordination point for L-serine.

This sequence belongs to the class-II aminoacyl-tRNA synthetase family. Type-1 seryl-tRNA synthetase subfamily. As to quaternary structure, homodimer. The tRNA molecule binds across the dimer.

It localises to the cytoplasm. The enzyme catalyses tRNA(Ser) + L-serine + ATP = L-seryl-tRNA(Ser) + AMP + diphosphate + H(+). It carries out the reaction tRNA(Sec) + L-serine + ATP = L-seryl-tRNA(Sec) + AMP + diphosphate + H(+). Its pathway is aminoacyl-tRNA biosynthesis; selenocysteinyl-tRNA(Sec) biosynthesis; L-seryl-tRNA(Sec) from L-serine and tRNA(Sec): step 1/1. Its function is as follows. Catalyzes the attachment of serine to tRNA(Ser). Is also able to aminoacylate tRNA(Sec) with serine, to form the misacylated tRNA L-seryl-tRNA(Sec), which will be further converted into selenocysteinyl-tRNA(Sec). This is Serine--tRNA ligase from Chlamydia felis (strain Fe/C-56) (Chlamydophila felis).